Reading from the N-terminus, the 2286-residue chain is Unconventional myosin-IXAb (2286 aa).

The Ras-associating domain occupies 16 to 114; it reads SEFTLRVYPG…YRFLLREKNL (99 aa). The Myosin motor domain maps to 148 to 971; that stretch reads AQFVADLCSL…LRQRLQDELH (824 aa). The chain crosses the membrane as a helical span at residues 178–198; it reads IYTYVGSILIAVNPFKFLPIY. Residue 242–249 coordinates ATP; it reads GESGSGKT. Residues 853–875 form an actin-binding region; the sequence is LNKLMETLGQSEPYFVKCIRSNA. IQ domains are found at residues 976-996, 1025-1054, 1066-1095, and 1089-1118; these read RRIV…HFCR, QQGA…AVLI, RNTA…AAVT, and QRRA…QQCR. The neck or regulatory domain stretch occupies residues 976–1113; it reads RRIVCLQRSF…QSRQRCRILR (138 aa). Residues 1114 to 2254 form a tail region; the sequence is EQQCREQSKH…PRANRSCPPK (1141 aa). 4 disordered regions span residues 1118-1279, 1308-1341, 1455-1588, and 1732-1754; these read REQS…QIRE, DVPL…FSVS, CEED…EPML, and DGTI…SDTV. The span at 1123–1133 shows a compositional bias: polar residues; it reads HPSTVTKSLHQ. Basic and acidic residues predominate over residues 1134–1149; sequence NTEEAEKLEEVWEKQT. Residues 1263–1273 show a composition bias toward polar residues; it reads PINSAPQTPNR. Positions 1455–1465 are enriched in acidic residues; that stretch reads CEEDEDDEYED. Basic and acidic residues predominate over residues 1485-1501; that stretch reads CVFHSDSEMSSQKEQKR. Residues 1529–1542 show a composition bias toward basic residues; it reads RGKMRFWSKSKHGD. Basic and acidic residues-rich tracts occupy residues 1550–1562 and 1572–1585; these read RSAD…RRND and GVSE…ENRE. The segment at 1759 to 1808 adopts a Phorbol-ester/DAG-type zinc-finger fold; that stretch reads GHIFKSTQYSIPTYCEFCSSLIWMMDKACVCKLCRYACHKKCCLRMTTKC. Positions 1823-2011 constitute a Rho-GAP domain; sequence VELSRLTSDE…LIICEQMRKY (189 aa). Residues 2032-2049 show a composition bias toward basic residues; that stretch reads LTHIRRSMGKSRARKSGH. Disordered regions lie at residues 2032–2087 and 2113–2286; these read LTHI…QQEE and PRAS…EFMV. Positions 2080 to 2107 form a coiled coil; sequence QAAMQQEEKVLTQQIENLQKEKEELTYE. 2 stretches are compositionally biased toward low complexity: residues 2176–2192 and 2200–2211; these read SLDS…SVSS and SSSSGPLFSSSS. Residues 2226-2238 show a composition bias toward polar residues; that stretch reads EQASLSARCASSS. A compositionally biased stretch (basic and acidic residues) spans 2254 to 2270; the sequence is KPREPGDTGGRRREHEF.

This sequence belongs to the TRAFAC class myosin-kinesin ATPase superfamily. Myosin family.

The protein resides in the membrane. It is found in the cytoplasm. Its subcellular location is the synapse. It localises to the cell projection. The protein localises to the growth cone. In terms of biological role, myosins are actin-based motor molecules with ATPase activity. Unconventional myosins serve in intracellular movements. Regulates Rho by stimulating it's GTPase activity in neurons. Required for the regulation of neurite branching and motor neuron axon guidance. This Danio rerio (Zebrafish) protein is Unconventional myosin-IXAb (myo9ab).